A 194-amino-acid polypeptide reads, in one-letter code: MRKWILTWILPSLLHRSCFHIICLVGTLSLDCNDMTPEQMATNVNCSSPERHTRSYDYMEGGDIRVRRLFCRTQWYPRIGKRGKVKGTQEMKNNYNIMEIRTVAVGIVAIKGVVSEYYLAMNKEGKLYAKKEYNEDCNFKELILENHYNTYASAKWTHSGGEMFVALNQKGVPVRGKKTKKEQKTAHFLPMAIT.

A signal peptide spans 1-31; sequence MRKWILTWILPSLLHRSCFHIICLVGTLSLD. Asparagine 45 carries an N-linked (GlcNAc...) asparagine glycan.

It belongs to the heparin-binding growth factors family. In terms of assembly, interacts with FGFBP1. Interacts with FGFR2. Affinity between fibroblast growth factors (FGFs) and their receptors is increased by heparan sulfate glycosaminoglycans that function as coreceptors.

Its subcellular location is the secreted. In terms of biological role, plays an important role in the regulation of embryonic development, cell proliferation and cell differentiation. Required for normal branching morphogenesis. Growth factor active on keratinocytes. Possible major paracrine effector of normal epithelial cell proliferation. The protein is Fibroblast growth factor 7 (FGF7) of Sus scrofa (Pig).